A 98-amino-acid chain; its full sequence is Large ribosomal subunit protein uL23 (98 aa).

It belongs to the universal ribosomal protein uL23 family. In terms of assembly, part of the 50S ribosomal subunit. Contacts protein L29, and trigger factor when it is bound to the ribosome.

Its function is as follows. One of the early assembly proteins it binds 23S rRNA. One of the proteins that surrounds the polypeptide exit tunnel on the outside of the ribosome. Forms the main docking site for trigger factor binding to the ribosome. The polypeptide is Large ribosomal subunit protein uL23 (Ruegeria sp. (strain TM1040) (Silicibacter sp.)).